The primary structure comprises 198 residues: Dephospho-CoA kinase (198 aa).

Positions Ile3–Ala198 constitute a DPCK domain. Residue Gly11–Thr16 participates in ATP binding.

Belongs to the CoaE family.

It localises to the cytoplasm. It carries out the reaction 3'-dephospho-CoA + ATP = ADP + CoA + H(+). Its pathway is cofactor biosynthesis; coenzyme A biosynthesis; CoA from (R)-pantothenate: step 5/5. Functionally, catalyzes the phosphorylation of the 3'-hydroxyl group of dephosphocoenzyme A to form coenzyme A. The polypeptide is Dephospho-CoA kinase (Dehalococcoides mccartyi (strain ATCC BAA-2266 / KCTC 15142 / 195) (Dehalococcoides ethenogenes (strain 195))).